The following is a 466-amino-acid chain: Tubulointerstitial nephritis antigen-like (466 aa).

An N-terminal signal peptide occupies residues 1 to 21; the sequence is MWGCWLGLLLLLLAGQAALEA. An SMB domain is found at 49–96; it reads EQDMCCRGRADECALPYLGATCYCDLFCNRTVSDCCPDFWDFCLGIPP. Intrachain disulfides connect cysteine 53/cysteine 72, cysteine 70/cysteine 72, cysteine 70/cysteine 84, cysteine 76/cysteine 83, and cysteine 84/cysteine 91. N-linked (GlcNAc...) asparagine glycosylation is present at asparagine 77. Asparagine 160 carries an N-linked (GlcNAc...) asparagine glycan.

It belongs to the peptidase C1 family. Post-translationally, glycosylated. Highly expressed in kidney, heart and adrenocortical cells of adrenal glands. Moderately expressed in spleen and liver. Also found in prostate, seminal vesicle, epididymis and testis in male reproductive organs. In adrenal glands is found in the outer cortical regions corresponding to the zona glomerulosa (zG) and the undifferentiated cell zone (zU) (at protein level).

Its subcellular location is the secreted. May be implicated in the adrenocortical zonation and in mechanisms for repressing the CYP11B1 gene expression in adrenocortical cells. This is a non catalytic peptidase C1 family protein. This chain is Tubulointerstitial nephritis antigen-like (Tinagl1), found in Mus musculus (Mouse).